Reading from the N-terminus, the 356-residue chain is 45 kDa calcium-binding protein (356 aa).

An N-terminal signal peptide occupies residues 1–29 (MMSRQAFLCSLGSLYLSLLFVFLLMDVYA). A glycan (N-linked (GlcNAc...) asparagine) is linked at Asn33. 5 EF-hand domains span residues 92-127 (KNRK…KTDE), 131-166 (EAVE…SKGL), 227-262 (MLKF…TVEN), 272-307 (WVKD…MNEY), and 308-343 (NALN…FTGS). Asp105, Asp107, Asp109, Lys111, Glu116, Asp144, Asp146, Asp148, His150, Glu155, Asp240, Asp242, Asp244, Lys246, Glu251, Asp285, Asn287, Asp289, Glu296, Asp321, Asn323, Asn325, His327, and Glu332 together coordinate Ca(2+).

This sequence belongs to the CREC family.

The protein resides in the golgi apparatus lumen. May regulate calcium-dependent activities in the endoplasmic reticulum lumen or post-ER compartment. In Gallus gallus (Chicken), this protein is 45 kDa calcium-binding protein (SDF4).